The chain runs to 1247 residues: Clustered mitochondria protein homolog (1247 aa).

Residues 1-43 (MTLGSETKTDVEVPIINGKHEIPQEENDSGHSSINTPDSSEPD) form a disordered region. Positions 30–39 (GHSSINTPDS) are enriched in polar residues. The Clu domain occupies 329–579 (SDSLRAIELT…RSMPPDVHYL (251 aa)). The tract at residues 1222-1247 (GKQQNGTTEESKTTDVAAQLDNETLD) is disordered.

It belongs to the CLU family.

The protein localises to the cytoplasm. Its function is as follows. mRNA-binding protein involved in proper cytoplasmic distribution of mitochondria. This Caenorhabditis elegans protein is Clustered mitochondria protein homolog.